The sequence spans 20 residues: Catechol 1,2-dioxygenase (20 aa).

The protein belongs to the intradiol ring-cleavage dioxygenase family. In terms of assembly, homodimer which dissociates into active monomeric subunits at high ionic strengths. The cofactor is Fe(3+).

The enzyme catalyses catechol + O2 = cis,cis-muconate + 2 H(+). It participates in aromatic compound metabolism; beta-ketoadipate pathway; 5-oxo-4,5-dihydro-2-furylacetate from catechol: step 1/3. In Acinetobacter radioresistens, this protein is Catechol 1,2-dioxygenase.